The following is a 227-amino-acid chain: Probable maleylacetoacetate isomerase 2 (227 aa).

The region spanning 14–97 (IQPILYSYWR…YLEETRPQRP (84 aa)) is the GST N-terminal domain. Glutathione-binding positions include 24–29 (SSCSWR), Q55, V69, 81–82 (ES), Q121, and 125–127 (NLI). Residues 102 to 222 (DVHKRAKVRE…HPSNQPDCPP (121 aa)) form the GST C-terminal domain.

Belongs to the GST superfamily. Zeta family. Glutathione is required as a cofactor.

It is found in the cytoplasm. It catalyses the reaction 4-maleylacetoacetate = 4-fumarylacetoacetate. The enzyme catalyses RX + glutathione = an S-substituted glutathione + a halide anion + H(+). The protein operates within amino-acid degradation; L-phenylalanine degradation; acetoacetate and fumarate from L-phenylalanine: step 5/6. Its function is as follows. Catalyzes the glutathione dependent oxygenation of dichloroacetic acid to glyoxylic acid in vitro. Has no glutathione thioltransferase activity with 4-hydroxynonenal (4-HNE), adrenochrome, phenethyl isothiocyanate (PEITC), 5-hydroperoxyeicosatetraenoic acid ((5S)-HpETE), prostaglandin A2 (PGA2) or 2-hydroxyethyldisulfide (HED). The sequence is that of Probable maleylacetoacetate isomerase 2 (GstZ2) from Drosophila melanogaster (Fruit fly).